The primary structure comprises 182 residues: CDP-diacylglycerol--glycerol-3-phosphate 3-phosphatidyltransferase (182 aa).

Residues Met1 to Phe12 lie on the Cytoplasmic side of the membrane. The chain crosses the membrane as a helical span at residues Arg13–Ile37. Residues Ile38 to Thr60 lie on the Periplasmic side of the membrane. A helical transmembrane segment spans residues Cys61–Leu81. Residues Ile82–Phe86 are Cytoplasmic-facing. A helical transmembrane segment spans residues His87–Ser107. Over Leu108–Glu145 the chain is Periplasmic. Residues Thr146–Met168 traverse the membrane as a helical segment. The Cytoplasmic portion of the chain corresponds to Leu169–Arg181.

It belongs to the CDP-alcohol phosphatidyltransferase class-I family.

Its subcellular location is the cell inner membrane. The enzyme catalyses a CDP-1,2-diacyl-sn-glycerol + sn-glycerol 3-phosphate = a 1,2-diacyl-sn-glycero-3-phospho-(1'-sn-glycero-3'-phosphate) + CMP + H(+). It functions in the pathway phospholipid metabolism; phosphatidylglycerol biosynthesis; phosphatidylglycerol from CDP-diacylglycerol: step 1/2. Functionally, catalyzes the conversion of cytidine diphosphate diacylglycerol (CDP-DG) and glycerol 3-phosphate into phosphatidylglycerol. Essential for the synthesis of anionic phospholipids, thereby playing a role in balancing the ratio of zwitterionic and anionic phospholipids, which is thought to be important for normal membrane function. This chain is CDP-diacylglycerol--glycerol-3-phosphate 3-phosphatidyltransferase, found in Wigglesworthia glossinidia brevipalpis.